The chain runs to 217 residues: Nascent polypeptide-associated complex subunit alpha-like protein 2 (217 aa).

The tract at residues 1 to 81 (MSPPPAVVTE…SEKKSRKAML (81 aa)) is disordered. Residues 37–60 (PIVEDVKDDEDDDDDDEEEEDDDA) are compositionally biased toward acidic residues. The NAC-A/B domain occupies 70-135 (SRSEKKSRKA…AKIEDLSSQL (66 aa)). A UBA domain is found at 178-215 (VEARDIDLVMTQAGVSRSKAVKALKSHDGDIVSAIMEL).

Belongs to the NAC-alpha family.

May promote appropriate targeting of ribosome-nascent polypeptide complexes. The polypeptide is Nascent polypeptide-associated complex subunit alpha-like protein 2 (Arabidopsis thaliana (Mouse-ear cress)).